Here is a 317-residue protein sequence, read N- to C-terminus: L-lactate dehydrogenase 2 (317 aa).

Residues Val16, Asp37, Lys42, Tyr68, and Gly82–Ala83 contribute to the NAD(+) site. Positions 85 and 91 each coordinate substrate. NAD(+) contacts are provided by residues Thr104, Ala121–Asn123, and Thr146. Asn123 to Asp126 is a substrate binding site. Position 151–154 (Asp151–Arg154) interacts with substrate. 2 residues coordinate beta-D-fructose 1,6-bisphosphate: Arg156 and His171. Catalysis depends on His178, which acts as the Proton acceptor. Position 223 is a phosphotyrosine (Tyr223). Thr232 is a binding site for substrate.

This sequence belongs to the LDH/MDH superfamily. LDH family. In terms of assembly, homotetramer.

It localises to the cytoplasm. The enzyme catalyses (S)-lactate + NAD(+) = pyruvate + NADH + H(+). Its pathway is fermentation; pyruvate fermentation to lactate; (S)-lactate from pyruvate: step 1/1. With respect to regulation, allosterically activated by fructose 1,6-bisphosphate (FBP). Its function is as follows. Catalyzes the conversion of lactate to pyruvate. In Enterococcus faecalis (strain ATCC 700802 / V583), this protein is L-lactate dehydrogenase 2.